A 506-amino-acid chain; its full sequence is Acyl-CoA-binding domain-containing protein 5 (506 aa).

One can recognise an ACB domain in the interval 44 to 133 (YETRFEAAVK…MKKIIETMPM (90 aa)). Residues 55-64 (IQSLPKNGSF), 75-79 (YSFYK), Lys-101, and Tyr-120 each bind an acyl-CoA. The segment at 175 to 217 (AKAVNGKAESSDSGAESEEEEAQEELKGAEQSGSDDKKMMTKS) is disordered. Residues 181-209 (KAESSDSGAESEEEEAQEELKGAEQSGSD) adopt a coiled-coil conformation. Phosphoserine occurs at positions 184, 185, 187, 191, 206, and 233. Residues 198 to 217 (EELKGAEQSGSDDKKMMTKS) are compositionally biased toward basic and acidic residues. 2 disordered regions span residues 234–302 (FAQD…CDSM) and 345–417 (AVKG…RGSR). Residues 238–257 (SDIHTDSSRSARRSEDKKPT) show a composition bias toward basic and acidic residues. Positions 258 to 267 (DQSSQQTGNT) are enriched in polar residues. Position 301 is a phosphoserine (Ser-301). A compositionally biased stretch (basic and acidic residues) spans 348-360 (GKGEVKHGGEDGR). At Ser-403 the chain carries Phosphoserine. Residues 406–416 (DGERWGSDRGS) show a composition bias toward basic and acidic residues. Residues 426–451 (LVLIRLQEDMQNVLQRLHKLETLTAS) are a coiled coil. Lys-444 carries the post-translational modification N6-acetyllysine. A helical membrane pass occupies residues 478 to 498 (GALAFAIIWPFIAQWLVHLYY).

The protein belongs to the ATG37 family.

The protein resides in the peroxisome membrane. Its function is as follows. Acyl-CoA binding protein which acts as the peroxisome receptor for pexophagy but is dispensable for aggrephagy and nonselective autophagy. Binds medium- and long-chain acyl-CoA esters. This is Acyl-CoA-binding domain-containing protein 5 (Acbd5) from Rattus norvegicus (Rat).